We begin with the raw amino-acid sequence, 362 residues long: Putative lipoprotein YdaJ (362 aa).

A signal peptide spans 1-20 (MRHVLIAVILFFLSIGLSAG). A lipid anchor (N-palmitoyl cysteine) is attached at C21. Residue C21 is the site of S-diacylglycerol cysteine attachment.

It is found in the cell membrane. This Bacillus subtilis (strain 168) protein is Putative lipoprotein YdaJ (ydaJ).